A 448-amino-acid chain; its full sequence is Probable glycine dehydrogenase (decarboxylating) subunit 1 (448 aa).

This sequence belongs to the GcvP family. N-terminal subunit subfamily. In terms of assembly, the glycine cleavage system is composed of four proteins: P, T, L and H. In this organism, the P 'protein' is a heterodimer of two subunits.

The enzyme catalyses N(6)-[(R)-lipoyl]-L-lysyl-[glycine-cleavage complex H protein] + glycine + H(+) = N(6)-[(R)-S(8)-aminomethyldihydrolipoyl]-L-lysyl-[glycine-cleavage complex H protein] + CO2. The glycine cleavage system catalyzes the degradation of glycine. The P protein binds the alpha-amino group of glycine through its pyridoxal phosphate cofactor; CO(2) is released and the remaining methylamine moiety is then transferred to the lipoamide cofactor of the H protein. The sequence is that of Probable glycine dehydrogenase (decarboxylating) subunit 1 from Listeria monocytogenes serotype 4b (strain CLIP80459).